The sequence spans 253 residues: 5-oxoprolinase subunit A (253 aa).

The protein belongs to the LamB/PxpA family. As to quaternary structure, forms a complex composed of PxpA, PxpB and PxpC.

It catalyses the reaction 5-oxo-L-proline + ATP + 2 H2O = L-glutamate + ADP + phosphate + H(+). Functionally, catalyzes the cleavage of 5-oxoproline to form L-glutamate coupled to the hydrolysis of ATP to ADP and inorganic phosphate. This chain is 5-oxoprolinase subunit A, found in Azorhizobium caulinodans (strain ATCC 43989 / DSM 5975 / JCM 20966 / LMG 6465 / NBRC 14845 / NCIMB 13405 / ORS 571).